The sequence spans 96 residues: Large ribosomal subunit protein uL23 (96 aa).

It belongs to the universal ribosomal protein uL23 family. In terms of assembly, part of the 50S ribosomal subunit. Contacts protein L29, and trigger factor when it is bound to the ribosome.

Its function is as follows. One of the early assembly proteins it binds 23S rRNA. One of the proteins that surrounds the polypeptide exit tunnel on the outside of the ribosome. Forms the main docking site for trigger factor binding to the ribosome. The protein is Large ribosomal subunit protein uL23 of Caldicellulosiruptor saccharolyticus (strain ATCC 43494 / DSM 8903 / Tp8T 6331).